Here is a 335-residue protein sequence, read N- to C-terminus: MPAVLGFEGSANKIGVGVVRDGKVLANPRRTYVTPPGTGFLPGDTARHHRAVILDLLQEALTESGLTSQDIDCIAYTKGPGMGAPLVSVAVVARTVAQLWNKPLVGVNHCIGHIEMGRLITGATSPTVLYVSGGNTQVIAYSEHRYRIFGETIDIAVGNCLDRFARVLKISNDPSPGYNIEQMAKRGKKLVELPYTVKGMDVSFSGILSFIEDVAHRMLATGECTPEDLCFSLQETVFAMLVEITERAMAHCGSQEALIVGGVGCNVRLQEMMATMCQERGARLFATDERFCIDNGAMIAQAGWEMFRAGHRTPLSDSGVTQRYRTDEVEVTWRD.

A divalent metal cation contacts are provided by histidine 109, histidine 113, and tyrosine 130. Substrate is bound by residues 130 to 134 (YVSGG), aspartate 162, glycine 177, glutamate 181, and asparagine 266. Aspartate 294 provides a ligand contact to a divalent metal cation.

The protein belongs to the KAE1 / TsaD family. Component of the EKC/KEOPS complex composed of at least GON7, TP53RK, TPRKB, OSGEP and LAGE3; the whole complex dimerizes. Interacts with PRAME. A divalent metal cation is required as a cofactor. In terms of tissue distribution, widely expressed at low level. Expressed in heart, placenta, liver, kidney, lung, brain, skeletal muscle and pancreas.

It localises to the cytoplasm. The protein resides in the nucleus. The catalysed reaction is L-threonylcarbamoyladenylate + adenosine(37) in tRNA = N(6)-L-threonylcarbamoyladenosine(37) in tRNA + AMP + H(+). In terms of biological role, component of the EKC/KEOPS complex that is required for the formation of a threonylcarbamoyl group on adenosine at position 37 (t(6)A37) in tRNAs that read codons beginning with adenine. The complex is probably involved in the transfer of the threonylcarbamoyl moiety of threonylcarbamoyl-AMP (TC-AMP) to the N6 group of A37. OSGEP likely plays a direct catalytic role in this reaction, but requires other protein(s) of the complex to fulfill this activity. In Homo sapiens (Human), this protein is tRNA N6-adenosine threonylcarbamoyltransferase.